Reading from the N-terminus, the 94-residue chain is Non-specific lipid-transfer protein C4 (94 aa).

The first 26 residues, 1 to 26 (MAASKGNAAAAACALVLVLLAVGAEA), serve as a signal peptide directing secretion. 4 disulfide bridges follow: Cys-34–Cys-72, Cys-44–Cys-59, Cys-60–Cys-85, and Cys-70–Cys-92. An N-linked (GlcNAc...) asparagine glycan is attached at Asn-91.

Belongs to the plant LTP family.

Its function is as follows. Lipid-transfer protein that may be regulated by the transcription factor UDT1 in developing anthers and play a role in tapetum development. This Oryza sativa subsp. japonica (Rice) protein is Non-specific lipid-transfer protein C4.